The chain runs to 85 residues: HssA/B-like protein 59 (85 aa).

It belongs to the hssA/B family.

The chain is HssA/B-like protein 59 (hssl59) from Dictyostelium discoideum (Social amoeba).